Consider the following 560-residue polypeptide: 2-succinyl-5-enolpyruvyl-6-hydroxy-3-cyclohexene-1-carboxylate synthase (560 aa).

The protein belongs to the TPP enzyme family. MenD subfamily. As to quaternary structure, homodimer. The cofactor is Mg(2+). Mn(2+) serves as cofactor. Thiamine diphosphate is required as a cofactor.

It carries out the reaction isochorismate + 2-oxoglutarate + H(+) = 5-enolpyruvoyl-6-hydroxy-2-succinyl-cyclohex-3-ene-1-carboxylate + CO2. Its pathway is quinol/quinone metabolism; 1,4-dihydroxy-2-naphthoate biosynthesis; 1,4-dihydroxy-2-naphthoate from chorismate: step 2/7. The protein operates within quinol/quinone metabolism; menaquinone biosynthesis. In terms of biological role, catalyzes the thiamine diphosphate-dependent decarboxylation of 2-oxoglutarate and the subsequent addition of the resulting succinic semialdehyde-thiamine pyrophosphate anion to isochorismate to yield 2-succinyl-5-enolpyruvyl-6-hydroxy-3-cyclohexene-1-carboxylate (SEPHCHC). The protein is 2-succinyl-5-enolpyruvyl-6-hydroxy-3-cyclohexene-1-carboxylate synthase of Lactococcus lactis subsp. lactis (strain IL1403) (Streptococcus lactis).